The following is a 189-amino-acid chain: MNFITVAALAIVMVLAQANPARVRRNEEMSERYCIKHLDHYNKYCGDNAGPIDRALFGKVAKFCPAYEKHCAVGKAGLVELPDLGSPLVMPPVLPRGSDFASLDLPIADERKPAHIHSSRTAPQTTRLTAAIVATCTPECTAAHCTDECKCAHTHPKVHQMCNPPSSAAMAETCQRWYSKCTMFTPVQY.

Positions 1-18 are cleaved as a signal peptide; the sequence is MNFITVAALAIVMVLAQA.

As to quaternary structure, may interact with lin-12/Notch receptor. As to expression, expressed in coelomocytes (at protein level).

The protein resides in the apical cell membrane. Probable secreted lin-12/Notch ligand or co-ligand involved in the mediation of Notch signaling. Involved in the lin-12/Notch pathway signaling of cell fate in vulval precursor cells (VPCs), acting redundantly with dsl-1 and lag-2. Required for normal octanol avoidance response, acting via both lin-12/Notch and glp-1/Notch signaling pathways in neurons, in concert with lag-2. Involved in regulation of sleep-like quiescence during the larval to adult transition, acting via Notch receptor activation and in parallel with EGF signaling. This chain is Notch ligand osm-11, found in Caenorhabditis elegans.